An 847-amino-acid polypeptide reads, in one-letter code: Beta-galactosidase 1 (847 aa).

The N-terminal stretch at 1–32 is a signal peptide; that stretch reads MGSKPNAMKNVVAMAAVSALFLLGFLVCSVSG. The active-site Proton donor is glutamate 190. Glutamate 259 acts as the Nucleophile in catalysis. N-linked (GlcNAc...) asparagine glycosylation is present at asparagine 469. In terms of domain architecture, SUEL-type lectin spans 761 to 847; that stretch reads KPLHPKAHLQ…KKLAVEAVCA (87 aa).

This sequence belongs to the glycosyl hydrolase 35 family. Ubiquitous, at low levels.

The protein localises to the secreted. The protein resides in the extracellular space. It localises to the apoplast. It carries out the reaction Hydrolysis of terminal non-reducing beta-D-galactose residues in beta-D-galactosides.. This chain is Beta-galactosidase 1 (BGAL1), found in Arabidopsis thaliana (Mouse-ear cress).